A 263-amino-acid polypeptide reads, in one-letter code: Purine nucleoside phosphorylase SACOL1200 (263 aa).

His79, Cys124, and His141 together coordinate Zn(2+).

This sequence belongs to the purine nucleoside phosphorylase YfiH/LACC1 family. As to quaternary structure, homodimer. Requires Cu(2+) as cofactor. It depends on Zn(2+) as a cofactor.

The enzyme catalyses adenosine + phosphate = alpha-D-ribose 1-phosphate + adenine. The catalysed reaction is S-methyl-5'-thioadenosine + phosphate = 5-(methylsulfanyl)-alpha-D-ribose 1-phosphate + adenine. It carries out the reaction inosine + phosphate = alpha-D-ribose 1-phosphate + hypoxanthine. It catalyses the reaction adenosine + H2O + H(+) = inosine + NH4(+). Functionally, purine nucleoside enzyme that catalyzes the phosphorolysis of adenosine and inosine nucleosides, yielding D-ribose 1-phosphate and the respective free bases, adenine and hypoxanthine. Also catalyzes the phosphorolysis of S-methyl-5'-thioadenosine into adenine and S-methyl-5-thio-alpha-D-ribose 1-phosphate. Also has adenosine deaminase activity. This chain is Purine nucleoside phosphorylase SACOL1200, found in Staphylococcus aureus (strain COL).